The primary structure comprises 548 residues: MALHVPKAPGFAQMLKEGAKHFSGLEEAVYRNIQACKELAQTTRTAYGPNGMNKMVINHLEKLFVTNDAATILRELEVQHPAAKMIVMASHMQEQEVGDGTNFVLVFAGALLELAEELLRIGLSVSEVIEGYEIACRKAHEILPNLVCCSAKNLRDVDEVSSLLRTSIMSKQYGNEVFLAKLIAQACVSIFPDSGHFNVDNIRVCKILGSGISSSSVLHGMVFKKETEGDVTSVKDAKIAVYSCPFDGTITETKGTVLIKTAEELMNFSKGEENLMDAQVKAIADTGANVVVTGGKVADMALHYANKYNIMLVRLNSKWDLRRLCKTVGATALPRLTPPVLEEMGHCDSVCLSEVGDTQVVVFKHEKEDGAISTIVLRGSTDNLMDDIERAVDDGVNTFKVLTRDKRLVPGGGATEIELAKQITSYGETCPGLEQYAIKKFAEAFEAIPRALAENSGVKANEVISKLYAVHQEGNKNVGLDIEAEVPAVKDMLEAGILDTYLGKYWAIKLATNAAVTVLRVDQIIMAKPAGGPKPPSGKKDWDDDQND.

Alanine 2 is subject to N-acetylalanine. Serine 23 bears the Phosphoserine mark. Tyrosine 30 is subject to Phosphotyrosine. Residues tyrosine 47 and glycine 48 each contribute to the ADP site. Mg(2+) is bound at residue aspartate 99. Residues glycine 100, threonine 101, asparagine 102, and phenylalanine 103 each contribute to the ADP site. The ATP site is built by glycine 100, threonine 101, and asparagine 102. Residue serine 162 is modified to Phosphoserine. ADP-binding residues include methionine 169, serine 170, and lysine 171. The ATP site is built by serine 170 and lysine 171. The residue at position 213 (serine 213) is a Phosphoserine. Residues lysine 224, lysine 254, and lysine 260 each participate in a glycyl lysine isopeptide (Lys-Gly) (interchain with G-Cter in SUMO2) cross-link. Phosphoserine is present on residues serine 269 and serine 317. An N6-acetyllysine mark is found at lysine 318 and lysine 400. Glycine 412 provides a ligand contact to ADP. Position 412 (glycine 412) interacts with ATP. Residue lysine 459 forms a Glycyl lysine isopeptide (Lys-Gly) (interchain with G-Cter in SUMO1) linkage. Lysine 466 is modified (N6-acetyllysine). Residue aspartate 499 participates in ADP binding. Aspartate 499 and lysine 504 together coordinate ATP. Tyrosine 505 carries the post-translational modification Phosphotyrosine. Positions 529 to 548 (PAGGPKPPSGKKDWDDDQND) are disordered. A Glycyl lysine isopeptide (Lys-Gly) (interchain with G-Cter in SUMO2) cross-link involves residue lysine 534. Serine 537 is subject to Phosphoserine. Lysine 539 participates in a covalent cross-link: Glycyl lysine isopeptide (Lys-Gly) (interchain with G-Cter in SUMO2).

This sequence belongs to the TCP-1 chaperonin family. Component of the chaperonin-containing T-complex (TRiC), a hexadecamer composed of two identical back-to-back stacked rings enclosing a protein folding chamber. Each ring is made up of eight different subunits: TCP1/CCT1, CCT2, CCT3, CCT4, CCT5, CCT6A/CCT6, CCT7, CCT8. Interacts with PACRG. Interacts with DNAAF4. Interacts with synaptic plasticity regulator PANTS.

The protein localises to the cytoplasm. Its subcellular location is the cytoskeleton. The protein resides in the microtubule organizing center. It localises to the centrosome. It is found in the cilium basal body. The catalysed reaction is ATP + H2O = ADP + phosphate + H(+). In terms of biological role, component of the chaperonin-containing T-complex (TRiC), a molecular chaperone complex that assists the folding of actin, tubulin and other proteins upon ATP hydrolysis. The TRiC complex mediates the folding of WRAP53/TCAB1, thereby regulating telomere maintenance. As part of the TRiC complex may play a role in the assembly of BBSome, a complex involved in ciliogenesis regulating transports vesicles to the cilia. In Macaca fascicularis (Crab-eating macaque), this protein is T-complex protein 1 subunit theta (CCT8).